Consider the following 62-residue polypeptide: Large ribosomal subunit protein uL30 (62 aa).

Belongs to the universal ribosomal protein uL30 family. Part of the 50S ribosomal subunit.

This chain is Large ribosomal subunit protein uL30, found in Halalkalibacterium halodurans (strain ATCC BAA-125 / DSM 18197 / FERM 7344 / JCM 9153 / C-125) (Bacillus halodurans).